A 257-amino-acid chain; its full sequence is UPF0246 protein BF3795 (257 aa).

This sequence belongs to the UPF0246 family.

This is UPF0246 protein BF3795 from Bacteroides fragilis (strain ATCC 25285 / DSM 2151 / CCUG 4856 / JCM 11019 / LMG 10263 / NCTC 9343 / Onslow / VPI 2553 / EN-2).